The following is a 232-amino-acid chain: Ion-translocating oxidoreductase complex subunit E (232 aa).

A run of 6 helical transmembrane segments spans residues G18–A38, L39–V59, I69–A89, G93–G113, A127–A147, and P182–L202.

It belongs to the NqrDE/RnfAE family. The complex is composed of six subunits: RnfA, RnfB, RnfC, RnfD, RnfE and RnfG.

The protein resides in the cell inner membrane. Its function is as follows. Part of a membrane-bound complex that couples electron transfer with translocation of ions across the membrane. This is Ion-translocating oxidoreductase complex subunit E from Shewanella baltica (strain OS185).